Reading from the N-terminus, the 101-residue chain is Small ribosomal subunit protein uS14 (101 aa).

The protein belongs to the universal ribosomal protein uS14 family. As to quaternary structure, part of the 30S ribosomal subunit. Contacts proteins S3 and S10.

Functionally, binds 16S rRNA, required for the assembly of 30S particles and may also be responsible for determining the conformation of the 16S rRNA at the A site. The polypeptide is Small ribosomal subunit protein uS14 (Zymomonas mobilis subsp. mobilis (strain ATCC 31821 / ZM4 / CP4)).